The sequence spans 461 residues: UDP-N-acetylmuramate--L-alanine ligase (461 aa).

112-118 (GTHGKTT) contributes to the ATP binding site.

It belongs to the MurCDEF family.

The protein resides in the cytoplasm. The catalysed reaction is UDP-N-acetyl-alpha-D-muramate + L-alanine + ATP = UDP-N-acetyl-alpha-D-muramoyl-L-alanine + ADP + phosphate + H(+). It functions in the pathway cell wall biogenesis; peptidoglycan biosynthesis. Functionally, cell wall formation. This is UDP-N-acetylmuramate--L-alanine ligase from Geobacter sp. (strain M21).